Reading from the N-terminus, the 150-residue chain is UPF0756 membrane protein YE1142 (150 aa).

The next 4 helical transmembrane spans lie at 1–21 (MAALDPTLLILLVLAGLGIIS), 51–71 (YGLTIGILILTIGVMTPIASG), 88–108 (ILAIVVGVAVSWLGGRGVSLM), and 114–134 (VVAGLLVGTVLGVALFRGVPV).

This sequence belongs to the UPF0756 family.

It localises to the cell membrane. The chain is UPF0756 membrane protein YE1142 from Yersinia enterocolitica serotype O:8 / biotype 1B (strain NCTC 13174 / 8081).